We begin with the raw amino-acid sequence, 394 residues long: Elongation factor Tu 1 (394 aa).

The tr-type G domain maps to 10-204 (KPHVNVGTIG…ALDTYIPEPE (195 aa)). The tract at residues 19–26 (GHVDHGKT) is G1. 19–26 (GHVDHGKT) lines the GTP pocket. Threonine 26 is a Mg(2+) binding site. A G2 region spans residues 60 to 64 (GITIS). The G3 stretch occupies residues 81–84 (DCPG). GTP contacts are provided by residues 81–85 (DCPGH) and 136–139 (NKCD). The interval 136–139 (NKCD) is G4. The tract at residues 174-176 (SAL) is G5.

The protein belongs to the TRAFAC class translation factor GTPase superfamily. Classic translation factor GTPase family. EF-Tu/EF-1A subfamily. Monomer.

It is found in the cytoplasm. The catalysed reaction is GTP + H2O = GDP + phosphate + H(+). Its function is as follows. GTP hydrolase that promotes the GTP-dependent binding of aminoacyl-tRNA to the A-site of ribosomes during protein biosynthesis. The polypeptide is Elongation factor Tu 1 (Vibrio vulnificus (strain CMCP6)).